The chain runs to 500 residues: Probable malate:quinone oxidoreductase (500 aa).

It belongs to the MQO family. FAD is required as a cofactor.

It catalyses the reaction (S)-malate + a quinone = a quinol + oxaloacetate. The protein operates within carbohydrate metabolism; tricarboxylic acid cycle; oxaloacetate from (S)-malate (quinone route): step 1/1. In Gluconobacter oxydans (strain 621H) (Gluconobacter suboxydans), this protein is Probable malate:quinone oxidoreductase.